Consider the following 469-residue polypeptide: UDP-N-acetylmuramoylalanine--D-glutamate ligase (469 aa).

Position 125–131 (glycine 125–threonine 131) interacts with ATP.

The protein belongs to the MurCDEF family.

It is found in the cytoplasm. It carries out the reaction UDP-N-acetyl-alpha-D-muramoyl-L-alanine + D-glutamate + ATP = UDP-N-acetyl-alpha-D-muramoyl-L-alanyl-D-glutamate + ADP + phosphate + H(+). Its pathway is cell wall biogenesis; peptidoglycan biosynthesis. Cell wall formation. Catalyzes the addition of glutamate to the nucleotide precursor UDP-N-acetylmuramoyl-L-alanine (UMA). The polypeptide is UDP-N-acetylmuramoylalanine--D-glutamate ligase (Prochlorococcus marinus (strain NATL2A)).